The following is a 130-amino-acid chain: Methylglyoxal synthase (130 aa).

The region spanning 1–130 (MSTPRIALIA…DLARRLTANA (130 aa)) is the MGS-like domain. Residues His11, Lys15, 37-40 (TGTT), and 57-58 (SG) contribute to the substrate site. Residue Asp63 is the Proton donor/acceptor of the active site. His90 contacts substrate.

Belongs to the methylglyoxal synthase family.

It catalyses the reaction dihydroxyacetone phosphate = methylglyoxal + phosphate. Its function is as follows. Catalyzes the formation of methylglyoxal from dihydroxyacetone phosphate. The polypeptide is Methylglyoxal synthase (Burkholderia mallei (strain NCTC 10247)).